The chain runs to 326 residues: Cyclin-dependent kinase 1 (326 aa).

Residues 16–306 (FTKLEKIGEG…SKKALHHPYF (291 aa)) form the Protein kinase domain. Residues 22 to 30 (IGEGTYGVV) and Lys45 each bind ATP. Asp140 (proton acceptor) is an active-site residue.

The protein belongs to the protein kinase superfamily. CMGC Ser/Thr protein kinase family. CDC2/CDKX subfamily. As to quaternary structure, forms a stable but non-covalent complex with a regulatory subunit and with a cyclin. Interacts with cks-1.

The protein localises to the nucleus. The protein resides in the cytoplasm. It is found in the cytoskeleton. It localises to the microtubule organizing center. Its subcellular location is the centrosome. It carries out the reaction L-seryl-[protein] + ATP = O-phospho-L-seryl-[protein] + ADP + H(+). It catalyses the reaction L-threonyl-[protein] + ATP = O-phospho-L-threonyl-[protein] + ADP + H(+). The enzyme catalyses [DNA-directed RNA polymerase] + ATP = phospho-[DNA-directed RNA polymerase] + ADP + H(+). Its activity is regulated as follows. Phosphorylation both activates and inactivates the enzyme depending on the site of phosphorylation. Functionally, plays a key role in the control of the eukaryotic cell cycle. Required for entry into S-phase and mitosis. Acts as a component of the kinase complex that phosphorylates the repetitive C-terminus of RNA polymerase II. May function in concert with npp-16 to arrest prophase blastomeres in response to anoxia. The sequence is that of Cyclin-dependent kinase 1 from Caenorhabditis briggsae.